The sequence spans 430 residues: Tyrosine--tRNA ligase (430 aa).

Residue Tyr-36 participates in L-tyrosine binding. The 'HIGH' region signature appears at 41 to 50 (PTASSLHVGS). L-tyrosine contacts are provided by Tyr-170 and Gln-174. Residues 230 to 234 (KMGKT) carry the 'KMSKS' region motif. Lys-233 is a binding site for ATP. An S4 RNA-binding domain is found at 362-427 (VPAFELFDEI…GKKNYHRLVL (66 aa)).

The protein belongs to the class-I aminoacyl-tRNA synthetase family. TyrS type 1 subfamily. Homodimer.

The protein resides in the cytoplasm. The enzyme catalyses tRNA(Tyr) + L-tyrosine + ATP = L-tyrosyl-tRNA(Tyr) + AMP + diphosphate + H(+). In terms of biological role, catalyzes the attachment of tyrosine to tRNA(Tyr) in a two-step reaction: tyrosine is first activated by ATP to form Tyr-AMP and then transferred to the acceptor end of tRNA(Tyr). In Desulfatibacillum aliphaticivorans, this protein is Tyrosine--tRNA ligase.